The primary structure comprises 184 residues: ATP-dependent protease subunit HslV (184 aa).

Residue Thr-2 is part of the active site. Na(+) contacts are provided by Gly-157, Cys-160, and Thr-163.

This sequence belongs to the peptidase T1B family. HslV subfamily. As to quaternary structure, a double ring-shaped homohexamer of HslV is capped on each side by a ring-shaped HslU homohexamer. The assembly of the HslU/HslV complex is dependent on binding of ATP.

It localises to the cytoplasm. It carries out the reaction ATP-dependent cleavage of peptide bonds with broad specificity.. Allosterically activated by HslU binding. Its function is as follows. Protease subunit of a proteasome-like degradation complex believed to be a general protein degrading machinery. The polypeptide is ATP-dependent protease subunit HslV (Vibrio vulnificus (strain CMCP6)).